Here is a 93-residue protein sequence, read N- to C-terminus: Photosystem I iron-sulfur center (93 aa).

4Fe-4S ferredoxin-type domains are found at residues 13–43 (KDHEIRIYSTCIGCTQCVRACPTDVLEMVPS) and 50–80 (QVVTVPRIEDCVGCKRCESACPTDFLSIRVY). 8 residues coordinate [4Fe-4S] cluster: C23, C26, C29, C33, C60, C63, C66, and C70.

The eukaryotic PSI reaction center is composed of at least 11 subunits. It depends on [4Fe-4S] cluster as a cofactor.

The protein resides in the plastid. It localises to the chloroplast thylakoid membrane. It carries out the reaction reduced [plastocyanin] + hnu + oxidized [2Fe-2S]-[ferredoxin] = oxidized [plastocyanin] + reduced [2Fe-2S]-[ferredoxin]. Functionally, apoprotein for the two 4Fe-4S centers FA and FB of photosystem I (PSI); essential for photochemical activity. FB is the terminal electron acceptor of PSI, donating electrons to ferredoxin. The C-terminus interacts with PsaA/B/D and helps assemble the protein into the PSI complex. Required for binding of PsaD and PsaE to PSI. PSI is a plastocyanin-ferredoxin oxidoreductase, converting photonic excitation into a charge separation, which transfers an electron from the donor P700 chlorophyll pair to the spectroscopically characterized acceptors A0, A1, FX, FA and FB in turn. In Bigelowiella natans (Pedinomonas minutissima), this protein is Photosystem I iron-sulfur center.